The primary structure comprises 253 residues: Chemokine-binding protein (253 aa).

The first 17 residues, 1 to 17 (MKQYIVLACMCLAAAAM), serve as a signal peptide directing secretion. The segment at 62–87 (TEITESESDPEVESEDDSTSVEDVDP) is disordered. The span at 65–86 (TESESDPEVESEDDSTSVEDVD) shows a compositional bias: acidic residues.

Belongs to the orthopoxvirus OPG001 family. As to quaternary structure, binds to host CC chemokines, such as RANTES/CCL5, MIP-1alpha/CCL3, MCP-1/CCL2 and eotaxin.

Its subcellular location is the secreted. Inhibits host immune defense by binding to host chemokines. Binds host CC chemokines (beta chemokines) such as RANTES with high affinity, but not CXC or C chemokines (alpha and gamma chemokines). The chain is Chemokine-binding protein (OPG001) from Variola virus (isolate Human/India/Ind3/1967) (VARV).